We begin with the raw amino-acid sequence, 718 residues long: MKGAIQFLGALAAVQAVSATYIDWTQPFNSYDCGGKQCGGRPKFEPPAYSNERCTPQQNTGYDFSDAPDGDLPKYDDFDFSGYKCQKSKLQRRSGRGSGSKCASSYVEPETYSNEIKCGKKFSVDEFDISLEYESVIEFHYGMPDGSSCKHVSKCGTGITPVKNTQCGGAKSVKCKIHKSSQNKKKCKFNIHHIKFRCDKPSTTSAPVPATTSEPAPCTEYSCTATDTTTEPAPTEPAPTEPAPCTEYSCTATDTTTEPAPTEPAPCTEYSCTATDTTTEPAPCTEYSCTATDTTTEPAPTEPAPTEPAPCTEYSCTATDTTTEPAPTEPAPTEPAPCTEYSCTATDTTTEPAPTEPAPCTEYSCTATETTSEAVPTTTDEAPCTDYSCTATEAVPTTTDEAPCTEYSCTGVPTSEAVPTTSDDVPTTTDVYIPPTDVYVPPTDIYVPPANTSIPYETPSPSETETLPPSGTDVYTTLPSVPVETGCPPVLPQCMETWTKITQCVNSGDVKCLCPNPEYIKSVAECVEAWGVDDDEVAKALEYMQGLCAEHIPENPAIVTCVPTYVTLPPVTTGASTVTVSTTVVVPVTTASPEETNKPGYVPVFTTETVIRTVTVCPVKLVTTEPSKPVLVPGTITAPPYVPPTAPATIPATVPAEATTPPVEYAPSTLMTAYPTVPVPVNNTTPNPPIATGAASSFKAFSTVMLAGVIGLTALIMA.

The signal sequence occupies residues 1-19; that stretch reads MKGAIQFLGALAAVQAVSA. Tandem repeats lie at residues 217–243, 244–265, 266–282, 283–309, 310–336, 337–358, 359–382, 383–402, and 403–420. A disordered region spans residues 452-472; the sequence is TSIPYETPSPSETETLPPSGT. Positions 462 to 575 constitute a CFEM domain; that stretch reads SETETLPPSG…VTLPPVTTGA (114 aa). Intrachain disulfides connect C494–C526, C504–C512, and C514–C548. D509 serves as a coordination point for heme. Residue G693 is the site of GPI-anchor amidated glycine attachment. The propeptide at 694–718 is removed in mature form; sequence AASSFKAFSTVMLAGVIGLTALIMA.

The protein belongs to the RBT5 family. Post-translationally, the GPI-anchor is attached to the protein in the endoplasmic reticulum and serves to target the protein to the cell surface. There, the glucosamine-inositol phospholipid moiety is cleaved off and the GPI-modified mannoprotein is covalently attached via its lipidless GPI glycan remnant to the 1,6-beta-glucan of the outer cell wall layer.

The protein localises to the secreted. It is found in the cell wall. Its subcellular location is the cell membrane. Functionally, cell surface adhesion protein that plays a key role in switching between the saprophytic lifestyle and the predacious lifestyle (nematode trapping). Likely functions to prevent energy-consuming trap formation in the absence of nematodes, and keeps the fungus in the saprophytic life style. May influence the induction signal of trap formation by limiting the porosity of the cell wall and thus affecting its permeability of nitrogen source. The sequence is that of Adhesin-like cell surface protein MAD1 from Arthrobotrys oligospora (strain ATCC 24927 / CBS 115.81 / DSM 1491) (Nematode-trapping fungus).